The sequence spans 184 residues: Small ribosomal subunit protein uS4c (184 aa).

Positions 82–143 (MRLDNILFRL…KQRSKALIQN (62 aa)) constitute an S4 RNA-binding domain.

The protein belongs to the universal ribosomal protein uS4 family. Part of the 30S ribosomal subunit. Contacts protein S5. The interaction surface between S4 and S5 is involved in control of translational fidelity.

The protein resides in the plastid. Its subcellular location is the chloroplast. In terms of biological role, one of the primary rRNA binding proteins, it binds directly to 16S rRNA where it nucleates assembly of the body of the 30S subunit. With S5 and S12 plays an important role in translational accuracy. The polypeptide is Small ribosomal subunit protein uS4c (rps4) (Patersonia fragilis (Short purple-flag)).